We begin with the raw amino-acid sequence, 105 residues long: Large ribosomal subunit protein uL24 (105 aa).

Belongs to the universal ribosomal protein uL24 family. In terms of assembly, part of the 50S ribosomal subunit.

Functionally, one of two assembly initiator proteins, it binds directly to the 5'-end of the 23S rRNA, where it nucleates assembly of the 50S subunit. Its function is as follows. One of the proteins that surrounds the polypeptide exit tunnel on the outside of the subunit. The protein is Large ribosomal subunit protein uL24 of Aliivibrio salmonicida (strain LFI1238) (Vibrio salmonicida (strain LFI1238)).